The sequence spans 300 residues: Cysteine-rich venom protein (300 aa).

A signal peptide spans 1–21; sequence MLSTMQTVGAVLMLSIVLVAG. The propeptide occupies 22 to 24; sequence RKR. Positions 62-183 constitute an SCP domain; sequence LEMHNKIRAD…GNNKYFVCNY (122 aa).

Post-translationally, contains 11 disulfide bonds. As to expression, expressed by the venom duct.

Its subcellular location is the secreted. In terms of biological role, protease responsible for cleaving the conotoxins from their propeptide precursors. The target propeptide requires minimum four residues including a leucine N-terminal of the cleavage site for efficient substrate processing (example: Xaa-Xaa-Xaa-Leu-Asn-Lys-Arg-toxin). The sequence is that of Cysteine-rich venom protein from Conus textile (Cloth-of-gold cone).